The chain runs to 437 residues: Trigger factor (437 aa).

A PPIase FKBP-type domain is found at 164 to 249 (GDRVTIDFAG…LKSVEAPKLP (86 aa)).

It belongs to the FKBP-type PPIase family. Tig subfamily.

Its subcellular location is the cytoplasm. The catalysed reaction is [protein]-peptidylproline (omega=180) = [protein]-peptidylproline (omega=0). Involved in protein export. Acts as a chaperone by maintaining the newly synthesized protein in an open conformation. Functions as a peptidyl-prolyl cis-trans isomerase. This is Trigger factor from Azoarcus sp. (strain BH72).